The chain runs to 131 residues: Small ribosomal subunit protein uS8 (131 aa).

It belongs to the universal ribosomal protein uS8 family. As to quaternary structure, part of the 30S ribosomal subunit. Contacts proteins S5 and S12.

In terms of biological role, one of the primary rRNA binding proteins, it binds directly to 16S rRNA central domain where it helps coordinate assembly of the platform of the 30S subunit. This Mycoplasmopsis agalactiae (strain NCTC 10123 / CIP 59.7 / PG2) (Mycoplasma agalactiae) protein is Small ribosomal subunit protein uS8.